A 363-amino-acid chain; its full sequence is Flagellar P-ring protein (363 aa).

An N-terminal signal peptide occupies residues 1–20 (MKKLTLVLFGMLFLASSAHA).

This sequence belongs to the FlgI family. As to quaternary structure, the basal body constitutes a major portion of the flagellar organelle and consists of four rings (L,P,S, and M) mounted on a central rod.

It localises to the periplasm. The protein resides in the bacterial flagellum basal body. Functionally, assembles around the rod to form the L-ring and probably protects the motor/basal body from shearing forces during rotation. The sequence is that of Flagellar P-ring protein from Vibrio atlanticus (strain LGP32) (Vibrio splendidus (strain Mel32)).